A 133-amino-acid chain; its full sequence is Holo-[acyl-carrier-protein] synthase (133 aa).

Mg(2+)-binding residues include aspartate 8 and glutamate 57.

The protein belongs to the P-Pant transferase superfamily. AcpS family. The cofactor is Mg(2+).

It localises to the cytoplasm. It carries out the reaction apo-[ACP] + CoA = holo-[ACP] + adenosine 3',5'-bisphosphate + H(+). Transfers the 4'-phosphopantetheine moiety from coenzyme A to a Ser of acyl-carrier-protein. The sequence is that of Holo-[acyl-carrier-protein] synthase from Chelativorans sp. (strain BNC1).